The primary structure comprises 676 residues: Probable metal-nicotianamine transporter YSL6 (676 aa).

The next 13 helical transmembrane spans lie at isoleucine 38 to histidine 58, leucine 62 to valine 82, cysteine 110 to methionine 130, glycine 154 to valine 174, isoleucine 276 to valine 296, valine 321 to alanine 341, phenylalanine 392 to phenylalanine 412, proline 413 to cysteine 433, isoleucine 452 to alanine 472, valine 510 to phenylalanine 530, leucine 561 to leucine 581, phenylalanine 604 to tryptophan 624, and valine 639 to isoleucine 659.

It belongs to the YSL (TC 2.A.67.2) family.

It is found in the membrane. In terms of biological role, may be involved in the transport of nicotianamine-chelated metals. The protein is Probable metal-nicotianamine transporter YSL6 (YSL6) of Arabidopsis thaliana (Mouse-ear cress).